Reading from the N-terminus, the 341-residue chain is S-adenosylmethionine:tRNA ribosyltransferase-isomerase (341 aa).

This sequence belongs to the QueA family. Monomer.

The protein localises to the cytoplasm. It catalyses the reaction 7-aminomethyl-7-carbaguanosine(34) in tRNA + S-adenosyl-L-methionine = epoxyqueuosine(34) in tRNA + adenine + L-methionine + 2 H(+). It functions in the pathway tRNA modification; tRNA-queuosine biosynthesis. Transfers and isomerizes the ribose moiety from AdoMet to the 7-aminomethyl group of 7-deazaguanine (preQ1-tRNA) to give epoxyqueuosine (oQ-tRNA). The chain is S-adenosylmethionine:tRNA ribosyltransferase-isomerase from Clostridium botulinum (strain ATCC 19397 / Type A).